The primary structure comprises 940 residues: AP-2 complex subunit alpha (940 aa).

Residues Ser-632 and Ser-634 each carry the phosphoserine modification. Over residues 651-662 the composition is skewed to polar residues; that stretch reads SHSKLNNSNANT. The segment at 651 to 679 is disordered; it reads SHSKLNNSNANTDLLGLSTPPSNNIGSGS. Residues 668-679 are compositionally biased toward low complexity; the sequence is STPPSNNIGSGS.

The protein belongs to the adaptor complexes large subunit family. Adaptor protein complex 2 (AP-2) is a heterotetramer composed of two large adaptins (alpha-type and beta-type subunits), a medium adaptin (mu-type subunit AP50) and a small adaptin (sigma-type subunit AP17). As to expression, expressed in the Garland cells, imaginal disks, adult midgut precursors, the antenno-maxillary complex, the endoderm, the fat bodies, and the visceral mesoderm and cells of the CNS and PNS including neuroblasts, the presumptive stomatogastric nervous system, and the lateral chordotonal sense organs.

It is found in the cell membrane. The protein localises to the membrane. It localises to the coated pit. Functionally, adaptins are components of the adapter complexes which link clathrin to receptors in coated vesicles. Clathrin-associated protein complexes are believed to interact with the cytoplasmic tails of membrane proteins, leading to their selection and concentration. AP-2alpha is a subunit of the plasma membrane adapter. The protein is AP-2 complex subunit alpha (AP-2alpha) of Drosophila melanogaster (Fruit fly).